Here is a 286-residue protein sequence, read N- to C-terminus: E3 ubiquitin-protein ligase RNF170 (286 aa).

Residues 1–52 (MQRYWRFQDNKIQDICFGVLGESWIQRPVMARYYSEGQSLQQDDSFIEGVSD) are Lumenal-facing. The chain crosses the membrane as a helical span at residues 53 to 73 (QVLVAVVVSLALTATLLYALL). The Cytoplasmic portion of the chain corresponds to 74-229 (RNVQQNIHPE…GGLFWMFRIR (156 aa)). The RING-type zinc finger occupies 115 to 158 (CPICLHQASFPVETNCGHLFCGSCIIAYWRYGSWLGAISCPICR). The helical transmembrane segment at 230–250 (IMLCLMGAFFYLISPLDFVPE) threads the bilayer. Residue Ala251 is a topological domain, lumenal. The chain crosses the membrane as a helical span at residues 252–272 (LFGILGFLDDFFVIFLLLIYI). The Cytoplasmic portion of the chain corresponds to 273 to 286 (SIMYREVITQRLTR).

Constitutively associated with the ERLIN1/ERLIN 2 complex. Interacts with activated ITPR1.

It is found in the endoplasmic reticulum membrane. The enzyme catalyses S-ubiquitinyl-[E2 ubiquitin-conjugating enzyme]-L-cysteine + [acceptor protein]-L-lysine = [E2 ubiquitin-conjugating enzyme]-L-cysteine + N(6)-ubiquitinyl-[acceptor protein]-L-lysine.. The protein operates within protein modification; protein ubiquitination. In terms of biological role, E3 ubiquitin-protein ligase that plays an essential role in stimulus-induced inositol 1,4,5-trisphosphate receptor type 1 (ITPR1) ubiquitination and degradation via the endoplasmic reticulum-associated degradation (ERAD) pathway. Also involved in ITPR1 turnover in resting cells. Selectively inhibits the TLR3-triggered innate immune response by promoting the 'Lys-48'-linked polyubiquitination and degradation of TLR3. This Mus musculus (Mouse) protein is E3 ubiquitin-protein ligase RNF170 (Rnf170).